A 748-amino-acid chain; its full sequence is Methylmalonyl-CoA mutase, mitochondrial (748 aa).

The N-terminal 30 residues, 1-30, are a transit peptide targeting the mitochondrion; sequence MLRAKNQLFLLSPHYLKQLNIPSASRWKRL. Residue Gln48 coordinates malonyl-CoA. At Lys87 the chain carries N6-acetyllysine. Malonyl-CoA contacts are provided by residues 94–97 and 104–108; these read YPTM and TIRQY. Residue Lys210 is modified to N6-acetyllysine. Residues 214–216, Arg226, Lys253, His263, and 302–304 each bind malonyl-CoA; these read TIQ and RLS. Lys333 carries the post-translational modification N6-acetyllysine. Lys341 is modified (N6-succinyllysine). The residue at position 479 (Ser479) is a Phosphoserine. Lys593 is subject to N6-succinyllysine. Lys600 is subject to N6-acetyllysine. The region spanning 612 to 744 is the B12-binding domain; sequence RPRLLVAKMG…DDIEKCLAEK (133 aa). His625 provides a ligand contact to adenosylcob(III)alamin.

The protein belongs to the methylmalonyl-CoA mutase family. As to quaternary structure, homodimer. Interacts (the apoenzyme form) with MMAA; the interaction is GTP dependent. It depends on adenosylcob(III)alamin as a cofactor.

The protein resides in the mitochondrion matrix. The protein localises to the mitochondrion. It is found in the cytoplasm. The enzyme catalyses (R)-methylmalonyl-CoA = succinyl-CoA. Its activity is regulated as follows. Inhibited by itaconyl-CoA, a metabolite that inactivates the coenzyme B12 cofactor. In terms of biological role, catalyzes the reversible isomerization of methylmalonyl-CoA (MMCoA) (generated from branched-chain amino acid metabolism and degradation of dietary odd chain fatty acids and cholesterol) to succinyl-CoA (3-carboxypropionyl-CoA), a key intermediate of the tricarboxylic acid cycle. This Mus musculus (Mouse) protein is Methylmalonyl-CoA mutase, mitochondrial (Mmut).